A 65-amino-acid polypeptide reads, in one-letter code: Translational regulator CsrA (65 aa).

Belongs to the CsrA/RsmA family. In terms of assembly, homodimer; the beta-strands of each monomer intercalate to form a hydrophobic core, while the alpha-helices form wings that extend away from the core.

The protein resides in the cytoplasm. A translational regulator that binds mRNA to regulate translation initiation and/or mRNA stability. Usually binds in the 5'-UTR at or near the Shine-Dalgarno sequence preventing ribosome-binding, thus repressing translation. Its main target seems to be the major flagellin gene, while its function is anatagonized by FliW. This chain is Translational regulator CsrA, found in Bordetella petrii (strain ATCC BAA-461 / DSM 12804 / CCUG 43448).